Here is a 929-residue protein sequence, read N- to C-terminus: Type I restriction enzyme SauCOLORF180P endonuclease subunit (929 aa).

One can recognise a Helicase ATP-binding domain in the interval 254–418; sequence QQATETGNNG…DGRTTADIFG (165 aa). Residue 268–274 participates in ATP binding; sequence TTGSGKT.

The protein belongs to the HsdR family. The type I restriction/modification system is composed of three polypeptides R, M and S.

The catalysed reaction is Endonucleolytic cleavage of DNA to give random double-stranded fragments with terminal 5'-phosphates, ATP is simultaneously hydrolyzed.. In terms of biological role, the restriction (R) subunit of a type I restriction enzyme that recognizes an undetermined sequence and cleaves a random distance away. Subunit R is required for both nuclease and ATPase activities, but not for modification. After locating a non-methylated recognition site, the enzyme complex serves as a molecular motor that translocates DNA in an ATP-dependent manner until a collision occurs that triggers cleavage. The chain is Type I restriction enzyme SauCOLORF180P endonuclease subunit from Staphylococcus aureus (strain COL).